The sequence spans 245 residues: UDP-2,3-diacylglucosamine hydrolase (245 aa).

Residues D8, H10, D41, N80, and H115 each contribute to the Mn(2+) site. A substrate-binding site is contributed by 80–81 (NR). Substrate-binding residues include D123, S161, K165, K168, and H196. 2 residues coordinate Mn(2+): H196 and H198.

This sequence belongs to the LpxH family. Requires Mn(2+) as cofactor.

Its subcellular location is the cell inner membrane. It catalyses the reaction UDP-2-N,3-O-bis[(3R)-3-hydroxytetradecanoyl]-alpha-D-glucosamine + H2O = 2-N,3-O-bis[(3R)-3-hydroxytetradecanoyl]-alpha-D-glucosaminyl 1-phosphate + UMP + 2 H(+). The protein operates within glycolipid biosynthesis; lipid IV(A) biosynthesis; lipid IV(A) from (3R)-3-hydroxytetradecanoyl-[acyl-carrier-protein] and UDP-N-acetyl-alpha-D-glucosamine: step 4/6. In terms of biological role, hydrolyzes the pyrophosphate bond of UDP-2,3-diacylglucosamine to yield 2,3-diacylglucosamine 1-phosphate (lipid X) and UMP by catalyzing the attack of water at the alpha-P atom. Involved in the biosynthesis of lipid A, a phosphorylated glycolipid that anchors the lipopolysaccharide to the outer membrane of the cell. This is UDP-2,3-diacylglucosamine hydrolase from Psychromonas ingrahamii (strain DSM 17664 / CCUG 51855 / 37).